The primary structure comprises 313 residues: Hydroxyphenylpyruvate reductase (313 aa).

Residues 152 to 155, 174 to 176, and isoleucine 230 each bind NADP(+); these read LGRI and SRS. Arginine 232 is a catalytic residue. Aspartate 256 contributes to the NADP(+) binding site. The active site involves glutamate 261. The Proton donor role is filled by histidine 279.

It belongs to the D-isomer specific 2-hydroxyacid dehydrogenase family.

It catalyses the reaction (2R)-2-hydroxy-3-(4-hydroxyphenyl)propanoate + NAD(+) = 3-(4-hydroxyphenyl)pyruvate + NADH + H(+). It carries out the reaction (2R)-2-hydroxy-3-(4-hydroxyphenyl)propanoate + NADP(+) = 3-(4-hydroxyphenyl)pyruvate + NADPH + H(+). The enzyme catalyses (2R)-3-(3,4-dihydroxyphenyl)lactate + NADP(+) = 3-(3,4-dihydroxyphenyl)pyruvate + NADPH + H(+). The catalysed reaction is (2R)-3-(3,4-dihydroxyphenyl)lactate + NAD(+) = 3-(3,4-dihydroxyphenyl)pyruvate + NADH + H(+). Functionally, catalyzes the NAD(P)H-dependent reduction of 4-hydroxyphenylpyruvate to 4-hydroxyphenyllactate and 3,4-dihydroxyphenylpyruvate to 3,4-dihydroxyphenyllactate in the biosynthesis of rosmarinic acid. Rosmarinic acid is an ester of caffeic acid and 3,4-dihydroxyphenyllactic acid. NADP is the preferred substrate. The sequence is that of Hydroxyphenylpyruvate reductase (HPPR) from Plectranthus scutellarioides (Coleus).